The sequence spans 314 residues: WD repeat domain-containing protein 83 (314 aa).

WD repeat units follow at residues 23–62 (CNQGAVRAVRFNVDGNYCMTCGSDKTLKLWNPHKGTLLKT), 65–104 (GHGYEVLDTAGSYDNSQMCSCSSDKTVILWDVAQGQVVRK), 107–146 (GHAGKVNCVQFNEEATVIMSGSIDSSIRCWDCRSRRPEAI), 151–188 (EAKDGISSIKISDHEILAGSVDGNLRRYDLRKGEMCAD), 189–228 (YLGSPITCVSFSQDSQCLLASSLDSTLRLLDKDTGELLGE), 231–272 (GHQN…LVLK), and 275–313 (VGKAAVQSLSFHPSECCLLTASEGGVQLWRGASYEEEGG).

Belongs to the WD repeat MORG1 family.

It localises to the cytoplasm. Functionally, molecular scaffold protein for various multimeric protein complexes. Acts as a module in the assembly of a multicomponent scaffold for the ERK pathway, linking ERK responses to specific agonists. Also involved in response to hypoxia by acting as a negative regulator of HIF1A/HIF-1-alpha. The sequence is that of WD repeat domain-containing protein 83 (wdr83) from Xenopus tropicalis (Western clawed frog).